Reading from the N-terminus, the 449-residue chain is Nuclear hormone receptor family member nhr-43 (449 aa).

Positions 44–122 (NIHCRVCERR…VGLNVDAVVG (79 aa)) form a DNA-binding region, nuclear receptor. NR C4-type zinc fingers lie at residues 47–68 (CRVCERRYDGSQHFGIDICRAC) and 84–105 (CRRGTNKCELNTVSRKTTCQKC). Residues 125 to 142 (SPDHVKTTSRDESVKKED) are compositionally biased toward basic and acidic residues. The tract at residues 125–154 (SPDHVKTTSRDESVKKEDEESDTGSEGKSC) is disordered. Residues 200 to 449 (NYNEFTKSRL…SDLNAYLYSI (250 aa)) enclose the NR LBD domain.

It is found in the nucleus. Ligand-activated transcription factor. Positively modulates expression of homeobox protein lin-39, perhaps by binding to the sequence motif 5'-TGAC-3' in regulatory regions of the lin-39 gene, acting in the embryo, and also in the vulval lineage. The chain is Nuclear hormone receptor family member nhr-43 from Caenorhabditis elegans.